The primary structure comprises 177 residues: Negative modulator of initiation of replication (177 aa).

It belongs to the SeqA family. Homodimer. Polymerizes to form helical filaments.

It is found in the cytoplasm. Negative regulator of replication initiation, which contributes to regulation of DNA replication and ensures that replication initiation occurs exactly once per chromosome per cell cycle. Binds to pairs of hemimethylated GATC sequences in the oriC region, thus preventing assembly of replication proteins and re-initiation at newly replicated origins. Repression is relieved when the region becomes fully methylated. The sequence is that of Negative modulator of initiation of replication from Vibrio cholerae serotype O1 (strain ATCC 39315 / El Tor Inaba N16961).